The sequence spans 316 residues: Probable porphobilinogen deaminase (316 aa).

C234 is modified (S-(dipyrrolylmethanemethyl)cysteine).

It belongs to the HMBS family. Dipyrromethane is required as a cofactor.

The catalysed reaction is 4 porphobilinogen + H2O = hydroxymethylbilane + 4 NH4(+). Its pathway is porphyrin-containing compound metabolism; protoporphyrin-IX biosynthesis; coproporphyrinogen-III from 5-aminolevulinate: step 2/4. Tetrapolymerization of the monopyrrole PBG into the hydroxymethylbilane pre-uroporphyrinogen in several discrete steps. The protein is Probable porphobilinogen deaminase of Methanosarcina mazei (strain ATCC BAA-159 / DSM 3647 / Goe1 / Go1 / JCM 11833 / OCM 88) (Methanosarcina frisia).